The sequence spans 192 residues: Thiosulfate reductase electron transfer subunit PhsB (192 aa).

4Fe-4S ferredoxin-type domains follow at residues 8–36 (YVML…VPEG), 55–86 (THFQ…RDEN), and 87–116 (GIVQ…LNPQ). The [4Fe-4S] cluster site is built by C17, C20, C23, C27, C64, C67, C72, C76, C96, C99, C102, C106, C123, C126, C139, and C143.

Composed of three subunits: PhsA, PhsB and PhsC. It depends on [4Fe-4S] cluster as a cofactor.

It is found in the cell inner membrane. In terms of biological role, component of the PhsABC thiosulfate reductase that catalyzes the reduction of thiosulfate to sulfite and hydrogen sulfide, with menaquinol as the sole electron donor. Proton motive force (PMF) is required to drive transmembrane electron transfer within the reductase. The PhsB subunit transfers electrons between PhsC and PhsA. The chain is Thiosulfate reductase electron transfer subunit PhsB (phsB) from Salmonella typhi.